Reading from the N-terminus, the 265-residue chain is Acyl-[acyl-carrier-protein]--UDP-N-acetylglucosamine O-acyltransferase (265 aa).

The protein belongs to the transferase hexapeptide repeat family. LpxA subfamily. As to quaternary structure, homotrimer.

The protein localises to the cytoplasm. It carries out the reaction a (3R)-hydroxyacyl-[ACP] + UDP-N-acetyl-alpha-D-glucosamine = a UDP-3-O-[(3R)-3-hydroxyacyl]-N-acetyl-alpha-D-glucosamine + holo-[ACP]. Its pathway is glycolipid biosynthesis; lipid IV(A) biosynthesis; lipid IV(A) from (3R)-3-hydroxytetradecanoyl-[acyl-carrier-protein] and UDP-N-acetyl-alpha-D-glucosamine: step 1/6. Involved in the biosynthesis of lipid A, a phosphorylated glycolipid that anchors the lipopolysaccharide to the outer membrane of the cell. This Polynucleobacter asymbioticus (strain DSM 18221 / CIP 109841 / QLW-P1DMWA-1) (Polynucleobacter necessarius subsp. asymbioticus) protein is Acyl-[acyl-carrier-protein]--UDP-N-acetylglucosamine O-acyltransferase.